A 245-amino-acid polypeptide reads, in one-letter code: 1-(5-phosphoribosyl)-5-[(5-phosphoribosylamino)methylideneamino] imidazole-4-carboxamide isomerase (245 aa).

Asp8 serves as the catalytic Proton acceptor. The active-site Proton donor is Asp129.

The protein belongs to the HisA/HisF family.

The protein resides in the cytoplasm. It carries out the reaction 1-(5-phospho-beta-D-ribosyl)-5-[(5-phospho-beta-D-ribosylamino)methylideneamino]imidazole-4-carboxamide = 5-[(5-phospho-1-deoxy-D-ribulos-1-ylimino)methylamino]-1-(5-phospho-beta-D-ribosyl)imidazole-4-carboxamide. The protein operates within amino-acid biosynthesis; L-histidine biosynthesis; L-histidine from 5-phospho-alpha-D-ribose 1-diphosphate: step 4/9. In Geotalea daltonii (strain DSM 22248 / JCM 15807 / FRC-32) (Geobacter daltonii), this protein is 1-(5-phosphoribosyl)-5-[(5-phosphoribosylamino)methylideneamino] imidazole-4-carboxamide isomerase.